The sequence spans 216 residues: Probable nicotinate-nucleotide adenylyltransferase (216 aa).

Belongs to the NadD family.

It catalyses the reaction nicotinate beta-D-ribonucleotide + ATP + H(+) = deamido-NAD(+) + diphosphate. It participates in cofactor biosynthesis; NAD(+) biosynthesis; deamido-NAD(+) from nicotinate D-ribonucleotide: step 1/1. Catalyzes the reversible adenylation of nicotinate mononucleotide (NaMN) to nicotinic acid adenine dinucleotide (NaAD). This is Probable nicotinate-nucleotide adenylyltransferase from Geobacter metallireducens (strain ATCC 53774 / DSM 7210 / GS-15).